We begin with the raw amino-acid sequence, 206 residues long: Ephrin-A4 (206 aa).

The N-terminal stretch at 1–25 is a signal peptide; that stretch reads MRLLPLLRTVLWAALLGSRLPGCSS. Residues 26–158 form the Ephrin RBD domain; that stretch reads LRHPIYWNSS…RLQVSVCCKE (133 aa). N33 carries N-linked (GlcNAc...) asparagine glycosylation. The Cell attachment site motif lies at 41-43; it reads RGD. Cystine bridges form between C58-C99 and C86-C147. N98 carries an N-linked (GlcNAc...) asparagine glycan. A disordered region spans residues 161-180; the sequence is SSHESAHPVGSPGESGTSGW. S175 carries GPI-anchor amidated serine lipidation. A propeptide spans 176 to 206 (removed in mature form); that stretch reads GTSGWRGGHAPSPLCLLLLLLLPILRLLRVL.

This sequence belongs to the ephrin family. Expressed in myogenic progenitor cells.

The protein localises to the cell membrane. Cell surface GPI-bound ligand for Eph receptors, a family of receptor tyrosine kinases which are crucial for migration, repulsion and adhesion during neuronal, vascular and epithelial development. Binds promiscuously Eph receptors residing on adjacent cells, leading to contact-dependent bidirectional signaling into neighboring cells. May play a role in the interaction between activated B-lymphocytes and dendritic cells in tonsils. In Mus musculus (Mouse), this protein is Ephrin-A4 (Efna4).